The sequence spans 533 residues: MNGAYRGALSRLLSKPFFLPLLSGLLLGISFPTWPAVHLEPLAWIALVPLLLSLEHEERFGPFFRKSWMSMLLFCLIALWWVCLATFVGGILTVFVQSLFSVVPLVVFYYFKKRAGFRSALLALPFIWTGWEWAYMQQDFSLGWLTFGNSQANLLWMVQYADVTGVWGVSFWLLTFNVLVLLLFMEKESFQVKVGIVMVMLVMIATPLLYARQVFRNTALDNTSPKVRVALVQPDIDPHEKWDGLGPEETLSRLYSLTGQSVRGERLELIIWPETAIPFYIRLPENKPYMDSVRRMVMRWNTPLLTGFPDEVPVFPNSARGEAVAASGAEYAAYNASMLLHPAGGPVQIYRKMRLVPFGERVPYSEYFPWLERLSFSMSGISSWAKGREATVMHFTSRDGQPVRMANIICYESIFPGQVSTFVRRGAQFLTLVTNDGWYGTSYGPWQHAAIDRLRCIENRRAMARCANTGVTLFYDICGRSYAETPWWQQSVLTADVPLESRITFYTAHPDLVPHVCLGIAGVLALVAAVRKR.

The next 5 helical transmembrane spans lie at 17 to 37 (FFLPLLSGLLLGISFPTWPAV), 72 to 92 (LLFCLIALWWVCLATFVGGIL), 116 to 136 (GFRSALLALPFIWTGWEWAYM), 165 to 185 (GVWGVSFWLLTFNVLVLLLFM), and 190 to 210 (FQVKVGIVMVMLVMIATPLLY). One can recognise a CN hydrolase domain in the interval 232 to 499 (VQPDIDPHEK…QSVLTADVPL (268 aa)). The Proton acceptor role is filled by Glu274. Lys352 is a catalytic residue. The active-site Nucleophile is Cys410. The chain crosses the membrane as a helical span at residues 510 to 530 (PDLVPHVCLGIAGVLALVAAV).

Belongs to the CN hydrolase family. Apolipoprotein N-acyltransferase subfamily.

It is found in the cell inner membrane. It catalyses the reaction N-terminal S-1,2-diacyl-sn-glyceryl-L-cysteinyl-[lipoprotein] + a glycerophospholipid = N-acyl-S-1,2-diacyl-sn-glyceryl-L-cysteinyl-[lipoprotein] + a 2-acyl-sn-glycero-3-phospholipid + H(+). It functions in the pathway protein modification; lipoprotein biosynthesis (N-acyl transfer). Its function is as follows. Catalyzes the phospholipid dependent N-acylation of the N-terminal cysteine of apolipoprotein, the last step in lipoprotein maturation. The chain is Apolipoprotein N-acyltransferase from Chlorobaculum tepidum (strain ATCC 49652 / DSM 12025 / NBRC 103806 / TLS) (Chlorobium tepidum).